The chain runs to 570 residues: Zeta-carotene desaturase, chloroplastic/chromoplastic (570 aa).

The segment covering 1-16 (MASVAATTTLAPALAP) has biased composition (low complexity). Positions 1-33 (MASVAATTTLAPALAPRRARPGTGLVPPRRASA) are disordered.

Belongs to the zeta carotene desaturase family. It depends on NAD(+) as a cofactor. NADP(+) serves as cofactor. Requires FAD as cofactor.

Its subcellular location is the plastid. The protein localises to the chloroplast. The protein resides in the chromoplast. The catalysed reaction is 9,9'-di-cis-zeta-carotene + 2 a quinone = 7,7',9,9'-tetra-cis-lycopene + 2 a quinol. It functions in the pathway carotenoid biosynthesis; lycopene biosynthesis. Functionally, catalyzes the conversion of zeta-carotene to lycopene via the intermediary of neurosporene. It carries out two consecutive desaturations (introduction of double bonds) at positions C-7 and C-7'. The polypeptide is Zeta-carotene desaturase, chloroplastic/chromoplastic (ZDS1) (Zea mays (Maize)).